The primary structure comprises 125 residues: MADLTKLVDELSALTVLEAAELSKLLEEKWGVSAAAPVAVAAAPAAGAAAAPAEEQTEFTVVLAKAGDKKINVIKEIRGITGLGLKEAKDLVEGAPKTVKEGVNKDEAEKIKKLLEDNGASVEVK.

It belongs to the bacterial ribosomal protein bL12 family. As to quaternary structure, homodimer. Part of the ribosomal stalk of the 50S ribosomal subunit. Forms a multimeric L10(L12)X complex, where L10 forms an elongated spine to which 2 to 4 L12 dimers bind in a sequential fashion. Binds GTP-bound translation factors.

Its function is as follows. Forms part of the ribosomal stalk which helps the ribosome interact with GTP-bound translation factors. Is thus essential for accurate translation. The polypeptide is Large ribosomal subunit protein bL12 (Gluconacetobacter diazotrophicus (strain ATCC 49037 / DSM 5601 / CCUG 37298 / CIP 103539 / LMG 7603 / PAl5)).